The following is a 183-amino-acid chain: MFNLPYHCKALLTAKQERGLTFDDVAKAINKPEVWTTALFYGQASTDKSTAEAILKALGGEQFWTDYNDRLEAGQEKIDIRRVLNGLSGNGEENMGVKGMVTRGATFEVPPKDPVLYRLYEVLVVYGYSYKALIYEKFGDGIMSAIDFRTSLERKKDPKGDRVVITMDGKFLPYSDPSAWGTQ.

Catalysis depends on residues R118, E121, and S144.

Belongs to the cyanase family.

The enzyme catalyses cyanate + hydrogencarbonate + 3 H(+) = NH4(+) + 2 CO2. In terms of biological role, catalyzes the reaction of cyanate with bicarbonate to produce ammonia and carbon dioxide. The chain is Cyanate hydratase from Cryptococcus neoformans var. neoformans serotype D (strain B-3501A) (Filobasidiella neoformans).